The primary structure comprises 68 residues: Pleurocidin (68 aa).

The signal sequence occupies residues 1-22; the sequence is MKFTATFLMMAIFVLMVEPGEC. A propeptide spanning residues 48–68 is cleaved from the precursor; it reads GDKQELNKRAVDEDPNVIVFE.

Belongs to the pleurocidin family. In terms of tissue distribution, goblet cells.

It localises to the secreted. The protein localises to the membrane. Antimicrobial peptide with potent activity against Gram-positive and Gram-negative bacteria. Activity against E.coli and B.subtilis. Weaker activity against L.mucor, s.marcescens and P.aeruginosa. May play a role in innate host defense. This Pseudopleuronectes americanus (Winter flounder) protein is Pleurocidin (ple1).